The following is a 273-amino-acid chain: 3-methyl-2-oxobutanoate hydroxymethyltransferase (273 aa).

Positions 53 and 92 each coordinate Mg(2+). Residues 53–54 (DS), D92, and K122 each bind 3-methyl-2-oxobutanoate. Position 124 (E124) interacts with Mg(2+). E191 acts as the Proton acceptor in catalysis.

The protein belongs to the PanB family. In terms of assembly, homodecamer; pentamer of dimers. It depends on Mg(2+) as a cofactor.

Its subcellular location is the cytoplasm. It carries out the reaction 3-methyl-2-oxobutanoate + (6R)-5,10-methylene-5,6,7,8-tetrahydrofolate + H2O = 2-dehydropantoate + (6S)-5,6,7,8-tetrahydrofolate. It participates in cofactor biosynthesis; (R)-pantothenate biosynthesis; (R)-pantoate from 3-methyl-2-oxobutanoate: step 1/2. In terms of biological role, catalyzes the reversible reaction in which hydroxymethyl group from 5,10-methylenetetrahydrofolate is transferred onto alpha-ketoisovalerate to form ketopantoate. This Parabacteroides distasonis (strain ATCC 8503 / DSM 20701 / CIP 104284 / JCM 5825 / NCTC 11152) protein is 3-methyl-2-oxobutanoate hydroxymethyltransferase.